Consider the following 29-residue polypeptide: Cyclotide mden-C (29 aa).

Residues 1 to 29 constitute a cross-link (cyclopeptide (Gly-Asn)); sequence GKPICGETCFKGKCYTPGCTCSYPVCKKN. Disulfide bonds link cysteine 5–cysteine 19, cysteine 9–cysteine 21, and cysteine 14–cysteine 26.

The protein belongs to the cyclotide family. Post-translationally, this is a cyclic peptide.

Its function is as follows. Probably participates in a plant defense mechanism. This is Cyclotide mden-C from Melicytus dentatus (Tree violet).